Consider the following 114-residue polypeptide: Small ribosomal subunit protein bS6 (114 aa).

This sequence belongs to the bacterial ribosomal protein bS6 family.

Functionally, binds together with bS18 to 16S ribosomal RNA. This Hydrogenovibrio crunogenus (strain DSM 25203 / XCL-2) (Thiomicrospira crunogena) protein is Small ribosomal subunit protein bS6.